The primary structure comprises 63 residues: Frenatin 1.1 (63 aa).

Positions 1–22 (MAFLKKSLFLVLFLGLVSLSIC) are cleaved as a signal peptide. Residues 23–49 (EKEKKEQEDEDENEEEKESEEGSEEKR) constitute a propeptide that is removed on maturation. Positions 25–63 (EKKEQEDEDENEEEKESEEGSEEKRGLLDTLGGILGLGR) are disordered. Residues 30–45 (EDEDENEEEKESEEGS) show a composition bias toward acidic residues. Leucine amide is present on L61.

In terms of tissue distribution, expressed by the skin glands.

The protein resides in the secreted. Its function is as follows. Antimicrobial peptide with selective activity. Is only active against Micrococcus luteus (MIC=25 ug/ml) and not against Bacillus cereus, Escherichia coli, Leuconostoc mesenteroides, Micrococcus luteus, Pastewella haemolytica, Staphylococcus aureus, Streptococcus faecalis and Streptococcus uberis. The sequence is that of Frenatin 1.1 from Nyctimystes infrafrenatus (White-lipped tree frog).